The following is a 374-amino-acid chain: Queuine tRNA-ribosyltransferase (374 aa).

Residue aspartate 91 is the Proton acceptor of the active site. Substrate-binding positions include 91-95 (DSGGY), aspartate 145, glutamine 189, and glycine 216. The RNA binding stretch occupies residues 247 to 253 (GVGTVPD). Aspartate 266 acts as the Nucleophile in catalysis. Residues 271-275 (TRNAR) are RNA binding; important for wobble base 34 recognition. Zn(2+) contacts are provided by cysteine 304, cysteine 306, cysteine 309, and histidine 335.

The protein belongs to the queuine tRNA-ribosyltransferase family. Homodimer. Within each dimer, one monomer is responsible for RNA recognition and catalysis, while the other monomer binds to the replacement base PreQ1. It depends on Zn(2+) as a cofactor.

The enzyme catalyses 7-aminomethyl-7-carbaguanine + guanosine(34) in tRNA = 7-aminomethyl-7-carbaguanosine(34) in tRNA + guanine. The protein operates within tRNA modification; tRNA-queuosine biosynthesis. Catalyzes the base-exchange of a guanine (G) residue with the queuine precursor 7-aminomethyl-7-deazaguanine (PreQ1) at position 34 (anticodon wobble position) in tRNAs with GU(N) anticodons (tRNA-Asp, -Asn, -His and -Tyr). Catalysis occurs through a double-displacement mechanism. The nucleophile active site attacks the C1' of nucleotide 34 to detach the guanine base from the RNA, forming a covalent enzyme-RNA intermediate. The proton acceptor active site deprotonates the incoming PreQ1, allowing a nucleophilic attack on the C1' of the ribose to form the product. After dissociation, two additional enzymatic reactions on the tRNA convert PreQ1 to queuine (Q), resulting in the hypermodified nucleoside queuosine (7-(((4,5-cis-dihydroxy-2-cyclopenten-1-yl)amino)methyl)-7-deazaguanosine). This chain is Queuine tRNA-ribosyltransferase, found in Leptospira borgpetersenii serovar Hardjo-bovis (strain JB197).